The chain runs to 732 residues: Wall-associated receptor kinase 2 (732 aa).

Positions 1 to 23 (MKVQEGLFVVAVFYLAYTQLVKG) are cleaved as a signal peptide. Residues 24 to 329 (QPRKECQTRC…RKVRPEYFRW (306 aa)) lie on the Extracellular side of the membrane. N57, N75, N111, N154, N217, and N246 each carry an N-linked (GlcNAc...) asparagine glycan. The EGF-like 1 domain maps to 230 to 277 (GDKTCKQVEYRGVCGGNSTCFDSTGGTGYNCKCLEGFEGNPYLPNGCQ). Cystine bridges form between C234–C249, C243–C260, C262–C276, C282–C295, C289–C304, and C306–C318. The EGF-like 2; calcium-binding domain maps to 278-319 (DINECISSRHNCSEHSTCENTKGSFNCNCPSGYRKDSLNSCT). N-linked (GlcNAc...) asparagine glycosylation occurs at N288. Residues 330 to 350 (TQIFLGTTIGFSVIMLGISCL) traverse the membrane as a helical segment. At 351–732 (QQKIKHRKNT…VTTLDIEAGR (382 aa)) the chain is on the cytoplasmic side. T393 carries the phosphothreonine modification. The Protein kinase domain maps to 404–677 (YHESRILGQG…KEVAAELEAL (274 aa)). Residues 410-418 (LGQGGQGTV) and K432 contribute to the ATP site. At Y477 the chain carries Phosphotyrosine. The active-site Proton acceptor is the D529. 2 positions are modified to phosphothreonine: T563 and T568. Y576 is subject to Phosphotyrosine.

It belongs to the protein kinase superfamily. Ser/Thr protein kinase family. In terms of tissue distribution, predominantly expressed in green tissues such as stems and leaves. Detected at organ junctions.

The protein localises to the membrane. The enzyme catalyses L-seryl-[protein] + ATP = O-phospho-L-seryl-[protein] + ADP + H(+). The catalysed reaction is L-threonyl-[protein] + ATP = O-phospho-L-threonyl-[protein] + ADP + H(+). Serine/threonine-protein kinase that may function as a signaling receptor of extracellular matrix component. Binding to pectin may have significance in the control of cell expansion, morphogenesis and development. This Arabidopsis thaliana (Mouse-ear cress) protein is Wall-associated receptor kinase 2 (WAK2).